Consider the following 1226-residue polypeptide: Receptor-type tyrosine-protein phosphatase O (1226 aa).

The first 29 residues, 1 to 29, serve as a signal peptide directing secretion; that stretch reads MGHLPRGTLGGRRLLPLLGLFVLLKIVTT. The Fibronectin type-III 1 domain maps to 30–115; it reads FHVAVQDDNN…TKPSRSITVL (86 aa). Over 30–832 the chain is Extracellular; the sequence is FHVAVQDDNN…VTEVNPNVVV (803 aa). N-linked (GlcNAc...) asparagine glycosylation is found at Asn-75, Asn-154, and Asn-227. The disordered stretch occupies residues 242 to 305; the sequence is EPSGSFPEDS…PNSTDYESTS (64 aa). Basic and acidic residues predominate over residues 260-270; the sequence is IGRDRRFHFPE. Over residues 277–291 the composition is skewed to low complexity; the sequence is PSNVSSGSPPSNVSS. Residue Asn-279 is glycosylated (N-linked (GlcNAc...) asparagine). Polar residues predominate over residues 296–305; that stretch reads PNSTDYESTS. 5 consecutive Fibronectin type-III domains span residues 339 to 435, 445 to 541, 542 to 638, 641 to 734, and 735 to 827; these read RTEK…ISPT, KPQH…IVPT, GIKD…TISF, APVA…LEPA, and PPKS…TEVN. Residues Asn-471 and Asn-500 are each glycosylated (N-linked (GlcNAc...) asparagine). Asn-710, Asn-743, and Asn-800 each carry an N-linked (GlcNAc...) asparagine glycan. The chain crosses the membrane as a helical span at residues 833–853; the sequence is ISVLAILSTLLIGLLLVTLVI. Over 854–1226 the chain is Cytoplasmic; the sequence is LRKKHLQMAR…DVIYENVSKS (373 aa). Ser-875 carries the post-translational modification Phosphoserine. In terms of domain architecture, Tyrosine-protein phosphatase spans 948–1205; the sequence is FSLQFEELKL…IFIHQCVQLM (258 aa). Substrate is bound by residues Asp-1112, 1146 to 1152, and Gln-1190; that span reads CSAGVGR. The active-site Phosphocysteine intermediate is the Cys-1146. Tyr-1220 is modified (phosphotyrosine).

Belongs to the protein-tyrosine phosphatase family. Receptor class 3 subfamily. Interacts (phosphorylated form) with FYN and GRB2.

The protein resides in the membrane. The catalysed reaction is O-phospho-L-tyrosyl-[protein] + H2O = L-tyrosyl-[protein] + phosphate. Possesses tyrosine phosphatase activity. Plays a role in regulating the glomerular pressure/filtration rate relationship through an effect on podocyte structure and function. This chain is Receptor-type tyrosine-protein phosphatase O (Ptpro), found in Mus musculus (Mouse).